The following is a 541-amino-acid chain: Multidrug transporter protein MdtP (541 aa).

Transmembrane regions (helical) follow at residues 14-34 (LLIT…TIVG), 40-60 (IVGD…YLLT), 79-99 (IVYV…GMAN), 112-132 (GIGG…LFTG), 141-161 (VFGA…GWIV), 168-188 (WVFY…ARGL), 201-221 (IAGI…LSFG), 229-249 (SWQI…FIIV), 273-293 (LIGF…PFFM), 307-327 (IMTP…QLVY), 329-349 (IGIK…FLLL), 359-379 (LVAT…MPIL), 401-420 (FFRS…VMNA), and 492-512 (LHSV…FTLF).

This sequence belongs to the major facilitator superfamily. EmrB family.

Its subcellular location is the cell membrane. Its function is as follows. Multidrug efflux transporter. Contributes to resistance to several antibiotics, including fusidic acid, novobiocin, streptomycin and actinomycin, possibly by pumping these structurally unrelated antibiotics out of cells. The polypeptide is Multidrug transporter protein MdtP (Bacillus subtilis (strain 168)).